A 229-amino-acid chain; its full sequence is 2,3-bisphosphoglycerate-dependent phosphoglycerate mutase (229 aa).

Substrate contacts are provided by residues 7–14 (RHGQSEWN), 20–21 (TG), R59, 86–89 (ERHY), K97, 113–114 (RR), and 182–183 (GN). The Tele-phosphohistidine intermediate role is filled by H8. E86 functions as the Proton donor/acceptor in the catalytic mechanism.

It belongs to the phosphoglycerate mutase family. BPG-dependent PGAM subfamily.

The catalysed reaction is (2R)-2-phosphoglycerate = (2R)-3-phosphoglycerate. Its pathway is carbohydrate degradation; glycolysis; pyruvate from D-glyceraldehyde 3-phosphate: step 3/5. In terms of biological role, catalyzes the interconversion of 2-phosphoglycerate and 3-phosphoglycerate. This chain is 2,3-bisphosphoglycerate-dependent phosphoglycerate mutase, found in Listeria monocytogenes serovar 1/2a (strain ATCC BAA-679 / EGD-e).